The sequence spans 497 residues: Guanosine-5'-triphosphate,3'-diphosphate pyrophosphatase (497 aa).

This sequence belongs to the GppA/Ppx family. GppA subfamily.

It catalyses the reaction guanosine 3'-diphosphate 5'-triphosphate + H2O = guanosine 3',5'-bis(diphosphate) + phosphate + H(+). It functions in the pathway purine metabolism; ppGpp biosynthesis; ppGpp from GTP: step 2/2. In terms of biological role, catalyzes the conversion of pppGpp to ppGpp. Guanosine pentaphosphate (pppGpp) is a cytoplasmic signaling molecule which together with ppGpp controls the 'stringent response', an adaptive process that allows bacteria to respond to amino acid starvation, resulting in the coordinated regulation of numerous cellular activities. The protein is Guanosine-5'-triphosphate,3'-diphosphate pyrophosphatase of Vibrio atlanticus (strain LGP32) (Vibrio splendidus (strain Mel32)).